Consider the following 270-residue polypeptide: Urease accessory protein UreD (270 aa).

Belongs to the UreD family. As to quaternary structure, ureD, UreF and UreG form a complex that acts as a GTP-hydrolysis-dependent molecular chaperone, activating the urease apoprotein by helping to assemble the nickel containing metallocenter of UreC. The UreE protein probably delivers the nickel.

Its subcellular location is the cytoplasm. Functionally, required for maturation of urease via the functional incorporation of the urease nickel metallocenter. The polypeptide is Urease accessory protein UreD (Klebsiella pneumoniae).